The chain runs to 1435 residues: Gag-Pol polyprotein (1435 aa).

Residue glycine 2 is the site of N-myristoyl glycine; by host attachment. The interaction with Gp41 stretch occupies residues 7 to 31; that stretch reads VLSGGKLDSWEKIRLRPGGRKKYKL. The tract at residues 8-43 is interaction with host CALM1; sequence LSGGKLDSWEKIRLRPGGRKKYKLKHIVWASRELGR. Positions 12 to 19 are interaction with host AP3D1; that stretch reads KLDSWEKI. The tract at residues 14-33 is interaction with membrane phosphatidylinositol 4,5-bisphosphate and RNA; the sequence is DSWEKIRLRPGGRKKYKLKH. A Nuclear export signal motif is present at residues 16–22; that stretch reads WEKIRLR. The short motif at 26-32 is the Nuclear localization signal element; it reads RKKYKLK. The interval 72-76 is interaction with membrane phosphatidylinositol 4,5-bisphosphate; sequence EELRS. Positions 107-126 are disordered; sequence QKNSQQEIQQAAKNEGNSNP. The segment covering 108 to 126 has biased composition (polar residues); sequence KNSQQEIQQAAKNEGNSNP. Residue tyrosine 131 is modified to Phosphotyrosine; by host. The interval 188 to 226 is interaction with human PPIA/CYPA and NUP153; the sequence is NTVGGHQAAMQMLKDTINDEAAEWDRIHPQQAGPIPPGQ. A dimerization/Multimerization of capsid protein p24 region spans residues 276–362; sequence YSPVSILDIR…GGPSHKARVL (87 aa). 2 consecutive CCHC-type zinc fingers follow at residues 391 to 408 and 412 to 429; these read IKCF…NCRA and KGCW…ECTE. The interval 444–478 is disordered; sequence GEARKLSPEQDRANSPTSRELRIRRGDSPLPEAGA. Positions 445 to 455 are enriched in basic and acidic residues; the sequence is EARKLSPEQDR. Residues 489–493 are dimerization of protease; that stretch reads PQITL. The Peptidase A2 domain occupies 508–577; the sequence is IEALLDTGAD…TPINIIGRNM (70 aa). Aspartate 513 acts as the For protease activity; shared with dimeric partner in catalysis. Dimerization of protease regions lie at residues 537 to 543 and 576 to 588; these read GIGGFIK and NMLT…LNFP. A Reverse transcriptase domain is found at 631-821; sequence EGKISKIGPE…PPFLWMGYEL (191 aa). Positions 697, 772, and 773 each coordinate Mg(2+). Residues 814 to 822 are RT 'primer grip'; it reads FLWMGYELH. The short motif at 985-1001 is the Tryptophan repeat motif element; that stretch reads WEVWWTEYWQAAWIPEW. The region spanning 1021-1144 is the RNase H type-1 domain; the sequence is IPGAETYYVD…VDKLVSSGIR (124 aa). The Mg(2+) site is built by aspartate 1030, glutamate 1065, aspartate 1085, and aspartate 1136. The Integrase-type zinc finger occupies 1150-1191; sequence DGIDKAQEEHERYHSNWRAMASDFNLPPVVAKEIVASCDKCQ. Residues histidine 1159, histidine 1163, cysteine 1187, and cysteine 1190 each coordinate Zn(2+). The region spanning 1201-1351 is the Integrase catalytic domain; it reads VDCSPGIWQL…SAGERIIDII (151 aa). 3 residues coordinate Mg(2+): aspartate 1211, aspartate 1263, and glutamate 1299. The integrase-type DNA-binding region spans 1370–1417; that stretch reads FRVYYRDSRDPIWKGPAKLLWKGEGAVVIQDNNEIKVVPRRKAKILKD.

In terms of assembly, homotrimer; further assembles as hexamers of trimers. Interacts with gp41 (via C-terminus). Interacts with host CALM1; this interaction induces a conformational change in the Matrix protein, triggering exposure of the myristate group. Interacts with host AP3D1; this interaction allows the polyprotein trafficking to multivesicular bodies during virus assembly. Part of the pre-integration complex (PIC) which is composed of viral genome, matrix protein, Vpr and integrase. Homodimer; the homodimer further multimerizes as homohexamers or homopentamers. Interacts with human PPIA/CYPA; This interaction stabilizes the capsid. Interacts with human NUP153. Interacts with host PDZD8; this interaction stabilizes the capsid. Interacts with monkey TRIM5; this interaction destabilizes the capsid. As to quaternary structure, homodimer, whose active site consists of two apposed aspartic acid residues. In terms of assembly, heterodimer of p66 RT and p51 RT (RT p66/p51). Heterodimerization of RT is essential for DNA polymerase activity. The overall folding of the subdomains is similar in p66 RT and p51 RT but the spatial arrangements of the subdomains are dramatically different. Homotetramer; may further associate as a homohexadecamer. Part of the pre-integration complex (PIC) which is composed of viral genome, matrix protein, Vpr and integrase. Interacts with human SMARCB1/INI1 and human PSIP1/LEDGF isoform 1. Interacts with human KPNA3; this interaction might play a role in nuclear import of the pre-integration complex. Interacts with human NUP153; this interaction might play a role in nuclear import of the pre-integration complex. It depends on Mg(2+) as a cofactor. Post-translationally, specific enzymatic cleavages by the viral protease yield mature proteins. The protease is released by autocatalytic cleavage. The polyprotein is cleaved during and after budding, this process is termed maturation. Proteolytic cleavage of p66 RT removes the RNase H domain to yield the p51 RT subunit. Nucleocapsid protein p7 might be further cleaved after virus entry. In terms of processing, tyrosine phosphorylated presumably in the virion by a host kinase. Phosphorylation is apparently not a major regulator of membrane association. Phosphorylated possibly by host MAPK1; this phosphorylation is necessary for Pin1-mediated virion uncoating. Post-translationally, methylated by host PRMT6, impairing its function by reducing RNA annealing and the initiation of reverse transcription.

It localises to the host cell membrane. The protein resides in the host endosome. The protein localises to the host multivesicular body. It is found in the virion membrane. Its subcellular location is the host nucleus. It localises to the host cytoplasm. The protein resides in the virion. The enzyme catalyses Specific for a P1 residue that is hydrophobic, and P1' variable, but often Pro.. The catalysed reaction is Endohydrolysis of RNA in RNA/DNA hybrids. Three different cleavage modes: 1. sequence-specific internal cleavage of RNA. Human immunodeficiency virus type 1 and Moloney murine leukemia virus enzymes prefer to cleave the RNA strand one nucleotide away from the RNA-DNA junction. 2. RNA 5'-end directed cleavage 13-19 nucleotides from the RNA end. 3. DNA 3'-end directed cleavage 15-20 nucleotides away from the primer terminus.. It carries out the reaction 3'-end directed exonucleolytic cleavage of viral RNA-DNA hybrid.. It catalyses the reaction DNA(n) + a 2'-deoxyribonucleoside 5'-triphosphate = DNA(n+1) + diphosphate. Protease: The viral protease is inhibited by many synthetic protease inhibitors (PIs), such as amprenavir, atazanavir, indinavir, loprinavir, nelfinavir, ritonavir and saquinavir. Use of protease inhibitors in tritherapy regimens permit more ambitious therapeutic strategies. Reverse transcriptase/ribonuclease H: RT can be inhibited either by nucleoside RT inhibitors (NRTIs) or by non nucleoside RT inhibitors (NNRTIs). NRTIs act as chain terminators, whereas NNRTIs inhibit DNA polymerization by binding a small hydrophobic pocket near the RT active site and inducing an allosteric change in this region. Classical NRTIs are abacavir, adefovir (PMEA), didanosine (ddI), lamivudine (3TC), stavudine (d4T), tenofovir (PMPA), zalcitabine (ddC), and zidovudine (AZT). Classical NNRTIs are atevirdine (BHAP U-87201E), delavirdine, efavirenz (DMP-266), emivirine (I-EBU), and nevirapine (BI-RG-587). The tritherapies used as a basic effective treatment of AIDS associate two NRTIs and one NNRTI. Its function is as follows. Mediates, with Gag polyprotein, the essential events in virion assembly, including binding the plasma membrane, making the protein-protein interactions necessary to create spherical particles, recruiting the viral Env proteins, and packaging the genomic RNA via direct interactions with the RNA packaging sequence (Psi). Gag-Pol polyprotein may regulate its own translation, by the binding genomic RNA in the 5'-UTR. At low concentration, the polyprotein would promote translation, whereas at high concentration, the polyprotein would encapsidate genomic RNA and then shut off translation. In terms of biological role, targets the polyprotein to the plasma membrane via a multipartite membrane-binding signal, that includes its myristoylated N-terminus. Matrix protein is part of the pre-integration complex. Implicated in the release from host cell mediated by Vpu. Binds to RNA. Forms the conical core that encapsulates the genomic RNA-nucleocapsid complex in the virion. Most core are conical, with only 7% tubular. The core is constituted by capsid protein hexamer subunits. The core is disassembled soon after virion entry. Host restriction factors such as TRIM5-alpha or TRIMCyp bind retroviral capsids and cause premature capsid disassembly, leading to blocks in reverse transcription. Capsid restriction by TRIM5 is one of the factors which restricts HIV-1 to the human species. Host PIN1 apparently facilitates the virion uncoating. On the other hand, interactions with PDZD8 or CYPA stabilize the capsid. Functionally, encapsulates and protects viral dimeric unspliced genomic RNA (gRNA). Binds these RNAs through its zinc fingers. Acts as a nucleic acid chaperone which is involved in rearangement of nucleic acid secondary structure during gRNA retrotranscription. Also facilitates template switch leading to recombination. As part of the polyprotein, participates in gRNA dimerization, packaging, tRNA incorporation and virion assembly. Its function is as follows. Aspartyl protease that mediates proteolytic cleavages of Gag and Gag-Pol polyproteins during or shortly after the release of the virion from the plasma membrane. Cleavages take place as an ordered, step-wise cascade to yield mature proteins. This process is called maturation. Displays maximal activity during the budding process just prior to particle release from the cell. Also cleaves Nef and Vif, probably concomitantly with viral structural proteins on maturation of virus particles. Hydrolyzes host EIF4GI and PABP1 in order to shut off the capped cellular mRNA translation. The resulting inhibition of cellular protein synthesis serves to ensure maximal viral gene expression and to evade host immune response. Also mediates cleavage of host YTHDF3. Mediates cleavage of host CARD8, thereby activating the CARD8 inflammasome, leading to the clearance of latent HIV-1 in patient CD4(+) T-cells after viral reactivation; in contrast, HIV-1 can evade CARD8-sensing when its protease remains inactive in infected cells prior to viral budding. In terms of biological role, multifunctional enzyme that converts the viral RNA genome into dsDNA in the cytoplasm, shortly after virus entry into the cell. This enzyme displays a DNA polymerase activity that can copy either DNA or RNA templates, and a ribonuclease H (RNase H) activity that cleaves the RNA strand of RNA-DNA heteroduplexes in a partially processive 3' to 5' endonucleasic mode. Conversion of viral genomic RNA into dsDNA requires many steps. A tRNA(3)-Lys binds to the primer-binding site (PBS) situated at the 5'-end of the viral RNA. RT uses the 3' end of the tRNA primer to perform a short round of RNA-dependent minus-strand DNA synthesis. The reading proceeds through the U5 region and ends after the repeated (R) region which is present at both ends of viral RNA. The portion of the RNA-DNA heteroduplex is digested by the RNase H, resulting in a ssDNA product attached to the tRNA primer. This ssDNA/tRNA hybridizes with the identical R region situated at the 3' end of viral RNA. This template exchange, known as minus-strand DNA strong stop transfer, can be either intra- or intermolecular. RT uses the 3' end of this newly synthesized short ssDNA to perform the RNA-dependent minus-strand DNA synthesis of the whole template. RNase H digests the RNA template except for two polypurine tracts (PPTs) situated at the 5'-end and near the center of the genome. It is not clear if both polymerase and RNase H activities are simultaneous. RNase H probably can proceed both in a polymerase-dependent (RNA cut into small fragments by the same RT performing DNA synthesis) and a polymerase-independent mode (cleavage of remaining RNA fragments by free RTs). Secondly, RT performs DNA-directed plus-strand DNA synthesis using the PPTs that have not been removed by RNase H as primers. PPTs and tRNA primers are then removed by RNase H. The 3' and 5' ssDNA PBS regions hybridize to form a circular dsDNA intermediate. Strand displacement synthesis by RT to the PBS and PPT ends produces a blunt ended, linear dsDNA copy of the viral genome that includes long terminal repeats (LTRs) at both ends. Catalyzes viral DNA integration into the host chromosome, by performing a series of DNA cutting and joining reactions. This enzyme activity takes place after virion entry into a cell and reverse transcription of the RNA genome in dsDNA. The first step in the integration process is 3' processing. This step requires a complex comprising the viral genome, matrix protein, Vpr and integrase. This complex is called the pre-integration complex (PIC). The integrase protein removes 2 nucleotides from each 3' end of the viral DNA, leaving recessed CA OH's at the 3' ends. In the second step, the PIC enters cell nucleus. This process is mediated through integrase and Vpr proteins, and allows the virus to infect a non dividing cell. This ability to enter the nucleus is specific of lentiviruses, other retroviruses cannot and rely on cell division to access cell chromosomes. In the third step, termed strand transfer, the integrase protein joins the previously processed 3' ends to the 5' ends of strands of target cellular DNA at the site of integration. The 5'-ends are produced by integrase-catalyzed staggered cuts, 5 bp apart. A Y-shaped, gapped, recombination intermediate results, with the 5'-ends of the viral DNA strands and the 3' ends of target DNA strands remaining unjoined, flanking a gap of 5 bp. The last step is viral DNA integration into host chromosome. This involves host DNA repair synthesis in which the 5 bp gaps between the unjoined strands are filled in and then ligated. Since this process occurs at both cuts flanking the HIV genome, a 5 bp duplication of host DNA is produced at the ends of HIV-1 integration. Alternatively, Integrase may catalyze the excision of viral DNA just after strand transfer, this is termed disintegration. The polypeptide is Gag-Pol polyprotein (gag-pol) (Human immunodeficiency virus type 1 group M subtype G (isolate 92NG083) (HIV-1)).